Here is a 366-residue protein sequence, read N- to C-terminus: NADH-quinone oxidoreductase subunit D (366 aa).

Belongs to the complex I 49 kDa subunit family. As to quaternary structure, NDH-1 is composed of 14 different subunits. Subunits NuoB, C, D, E, F, and G constitute the peripheral sector of the complex.

Its subcellular location is the cell membrane. It catalyses the reaction a quinone + NADH + 5 H(+)(in) = a quinol + NAD(+) + 4 H(+)(out). Functionally, NDH-1 shuttles electrons from NADH, via FMN and iron-sulfur (Fe-S) centers, to quinones in the respiratory chain. The immediate electron acceptor for the enzyme in this species is believed to be a menaquinone. Couples the redox reaction to proton translocation (for every two electrons transferred, four hydrogen ions are translocated across the cytoplasmic membrane), and thus conserves the redox energy in a proton gradient. In Bacillus thuringiensis (strain Al Hakam), this protein is NADH-quinone oxidoreductase subunit D.